The chain runs to 189 residues: Isopentenyl-diphosphate Delta-isomerase 2 (189 aa).

2 residues coordinate Mn(2+): H24 and H30. The 133-residue stretch at 28–160 folds into the Nudix hydrolase domain; it reads ALHRAISIFV…PETYSFWLAA (133 aa). Residue C65 is part of the active site. A Mg(2+)-binding site is contributed by C65. H67 contributes to the Mn(2+) binding site. E85 contributes to the Mg(2+) binding site. The Mn(2+) site is built by E110 and E112. E112 is an active-site residue.

The protein belongs to the IPP isomerase type 1 family. Mg(2+) is required as a cofactor. The cofactor is Mn(2+).

It is found in the cytoplasm. It catalyses the reaction isopentenyl diphosphate = dimethylallyl diphosphate. Its pathway is isoprenoid biosynthesis; dimethylallyl diphosphate biosynthesis; dimethylallyl diphosphate from isopentenyl diphosphate: step 1/1. In terms of biological role, catalyzes the 1,3-allylic rearrangement of the homoallylic substrate isopentenyl (IPP) to its highly electrophilic allylic isomer, dimethylallyl diphosphate (DMAPP). This chain is Isopentenyl-diphosphate Delta-isomerase 2, found in Aromatoleum aromaticum (strain DSM 19018 / LMG 30748 / EbN1) (Azoarcus sp. (strain EbN1)).